We begin with the raw amino-acid sequence, 286 residues long: Acetylglutamate kinase (286 aa).

Residues 70-71 (GG), R92, and N184 each bind substrate.

The protein belongs to the acetylglutamate kinase family. ArgB subfamily.

The protein resides in the cytoplasm. The catalysed reaction is N-acetyl-L-glutamate + ATP = N-acetyl-L-glutamyl 5-phosphate + ADP. It participates in amino-acid biosynthesis; L-arginine biosynthesis; N(2)-acetyl-L-ornithine from L-glutamate: step 2/4. In terms of biological role, catalyzes the ATP-dependent phosphorylation of N-acetyl-L-glutamate. This Ruegeria sp. (strain TM1040) (Silicibacter sp.) protein is Acetylglutamate kinase.